The chain runs to 348 residues: Holliday junction branch migration complex subunit RuvB (348 aa).

The large ATPase domain (RuvB-L) stretch occupies residues 4–184 (ADRLIAASGR…FGIVQRLEFY (181 aa)). ATP-binding positions include I23, R24, G65, K68, T69, T70, 131–133 (EDF), R174, Y184, and R221. T69 lines the Mg(2+) pocket. The interval 185–255 (SDKDLATIVS…VADLALNLLD (71 aa)) is small ATPAse domain (RuvB-S). Positions 258–348 (ERGFDHSDRR…GADFSEAGDE (91 aa)) are head domain (RuvB-H). DNA contacts are provided by R294, R313, and R318.

It belongs to the RuvB family. In terms of assembly, homohexamer. Forms an RuvA(8)-RuvB(12)-Holliday junction (HJ) complex. HJ DNA is sandwiched between 2 RuvA tetramers; dsDNA enters through RuvA and exits via RuvB. An RuvB hexamer assembles on each DNA strand where it exits the tetramer. Each RuvB hexamer is contacted by two RuvA subunits (via domain III) on 2 adjacent RuvB subunits; this complex drives branch migration. In the full resolvosome a probable DNA-RuvA(4)-RuvB(12)-RuvC(2) complex forms which resolves the HJ.

The protein localises to the cytoplasm. It carries out the reaction ATP + H2O = ADP + phosphate + H(+). Functionally, the RuvA-RuvB-RuvC complex processes Holliday junction (HJ) DNA during genetic recombination and DNA repair, while the RuvA-RuvB complex plays an important role in the rescue of blocked DNA replication forks via replication fork reversal (RFR). RuvA specifically binds to HJ cruciform DNA, conferring on it an open structure. The RuvB hexamer acts as an ATP-dependent pump, pulling dsDNA into and through the RuvAB complex. RuvB forms 2 homohexamers on either side of HJ DNA bound by 1 or 2 RuvA tetramers; 4 subunits per hexamer contact DNA at a time. Coordinated motions by a converter formed by DNA-disengaged RuvB subunits stimulates ATP hydrolysis and nucleotide exchange. Immobilization of the converter enables RuvB to convert the ATP-contained energy into a lever motion, pulling 2 nucleotides of DNA out of the RuvA tetramer per ATP hydrolyzed, thus driving DNA branch migration. The RuvB motors rotate together with the DNA substrate, which together with the progressing nucleotide cycle form the mechanistic basis for DNA recombination by continuous HJ branch migration. Branch migration allows RuvC to scan DNA until it finds its consensus sequence, where it cleaves and resolves cruciform DNA. The chain is Holliday junction branch migration complex subunit RuvB from Pseudomonas putida (strain W619).